Here is a 299-residue protein sequence, read N- to C-terminus: Protease HtpX homolog (299 aa).

2 consecutive transmembrane segments (helical) span residues 14-34 (ILVM…VGYL) and 39-59 (ATGG…IMVG). His-144 is a Zn(2+) binding site. Glu-145 is a catalytic residue. Position 148 (His-148) interacts with Zn(2+). Transmembrane regions (helical) follow at residues 159–179 (IALA…NFMW) and 196–216 (VFAI…ATMV). Glu-225 provides a ligand contact to Zn(2+).

The protein belongs to the peptidase M48B family. Zn(2+) is required as a cofactor.

The protein localises to the cell membrane. This is Protease HtpX homolog from Limosilactobacillus fermentum (strain NBRC 3956 / LMG 18251) (Lactobacillus fermentum).